The chain runs to 104 residues: Replication restart protein PriB (104 aa).

The region spanning 1 to 101 (MTNRLALSGT…LHAEQIELID (101 aa)) is the SSB domain.

It belongs to the PriB family. As to quaternary structure, homodimer. Interacts with PriA and DnaT. Component of the replication restart primosome. Primosome assembly occurs via a 'hand-off' mechanism. PriA binds to replication forks, subsequently PriB then DnaT bind; DnaT then displaces ssDNA to generate the helicase loading substrate.

Involved in the restart of stalled replication forks, which reloads the replicative helicase on sites other than the origin of replication; the PriA-PriB pathway is the major replication restart pathway. During primosome assembly it facilitates complex formation between PriA and DnaT on DNA; stabilizes PriA on DNA. Stimulates the DNA unwinding activity of PriA helicase. In Salmonella agona (strain SL483), this protein is Replication restart protein PriB.